Here is a 302-residue protein sequence, read N- to C-terminus: Probable alpha-L-glutamate ligase (302 aa).

The ATP-grasp domain maps to 112–294 (LQLLLKTGVP…IAAEIIDYIE (183 aa)). ATP-binding positions include Lys148, 185-186 (DF), Asp194, and 218-220 (RAN). Residues Asp255, Glu267, and Asn269 each contribute to the Mg(2+) site. Positions 255, 267, and 269 each coordinate Mn(2+).

Belongs to the RimK family. The cofactor is Mg(2+). Requires Mn(2+) as cofactor.

The chain is Probable alpha-L-glutamate ligase from Haemophilus influenzae (strain 86-028NP).